The following is a 959-amino-acid chain: Mitogen-activated protein kinase kinase kinase 13 (959 aa).

A disordered region spans residues 1 to 47 (MANPQEHLSCSSLPHLPLTENKTSGGRNELAAMGNHPSPKLPEDPQE). Over residues 7 to 18 (HLSCSSLPHLPL) the composition is skewed to low complexity. One can recognise a Protein kinase domain in the interval 167–408 (ISELQWLGSG…FRQTLMHLDI (242 aa)). ATP contacts are provided by residues 173 to 181 (LGSGAQGAV) and Lys194. Catalysis depends on Asp278, which acts as the Proton acceptor. Leucine-zipper stretches follow at residues 432 to 453 (VKKH…DEEL) and 485 to 506 (LSAI…EQAV). Disordered stretches follow at residues 533–599 (KRKG…GSHS), 739–828 (GSLD…RQRP), 842–902 (SSEN…LSDK), and 927–959 (NPVQ…SATW). The segment covering 566-577 (SPLSGSPKMSTA) has biased composition (polar residues). The segment covering 581 to 593 (SRYRSKPRHRRGN) has biased composition (basic residues). Polar residues-rich tracts occupy residues 754 to 774 (DLSS…SERT) and 780 to 790 (SGCQSGISHQF). Acidic residues predominate over residues 808–820 (DSSEEEGEVDSEV). The span at 866-876 (SANRRQDRLAE) shows a compositional bias: basic and acidic residues. Over residues 934-943 (SDCDSSEGEC) the composition is skewed to acidic residues. The segment covering 947–959 (TVRTSKNYSSATW) has biased composition (polar residues).

This sequence belongs to the protein kinase superfamily. STE Ser/Thr protein kinase family. MAP kinase kinase kinase subfamily. As to quaternary structure, homodimer; forms dimers through the leucine-zipper motif. Interacts with the C-terminus of MAPK8IP1 through the kinase catalytic domain. Binds PRDX3. Associates with the IKK complex through the kinase domain. Requires Mg(2+) as cofactor. In terms of processing, autophosphorylated on serine and threonine residues.

Its subcellular location is the cytoplasm. The protein localises to the membrane. The enzyme catalyses L-seryl-[protein] + ATP = O-phospho-L-seryl-[protein] + ADP + H(+). It carries out the reaction L-threonyl-[protein] + ATP = O-phospho-L-threonyl-[protein] + ADP + H(+). Activated by autophosphorylation and homodimerization. Its function is as follows. Activates the JUN N-terminal pathway through activation of the MAP kinase kinase MAP2K7. Acts synergistically with PRDX3 to regulate the activation of NF-kappa-B in the cytosol. This activation is kinase-dependent and involves activating the IKK complex, the IKBKB-containing complex that phosphorylates inhibitors of NF-kappa-B. This is Mitogen-activated protein kinase kinase kinase 13 (Map3k13) from Mus musculus (Mouse).